The primary structure comprises 213 residues: Thymidylate kinase (213 aa).

An ATP-binding site is contributed by 7–14 (GMDGSGKT).

The protein belongs to the thymidylate kinase family.

It carries out the reaction dTMP + ATP = dTDP + ADP. Its function is as follows. Phosphorylation of dTMP to form dTDP in both de novo and salvage pathways of dTTP synthesis. The sequence is that of Thymidylate kinase from Mycoplasma capricolum subsp. capricolum (strain California kid / ATCC 27343 / NCTC 10154).